Consider the following 62-residue polypeptide: UPF0337 protein mll8179 (62 aa).

Residues 1-42 form a disordered region; sequence MRNMVNKDQVAGLAKQLKGSVKQAAGKATGNRRTQAEGMADK.

Belongs to the UPF0337 (CsbD) family.

This chain is UPF0337 protein mll8179, found in Mesorhizobium japonicum (strain LMG 29417 / CECT 9101 / MAFF 303099) (Mesorhizobium loti (strain MAFF 303099)).